The primary structure comprises 256 residues: Major prion protein (256 aa).

An N-terminal signal peptide occupies residues methionine 1–cysteine 24. The segment at lysine 25–alanine 233 is interaction with GRB2, ERI3 and SYN1. Residues proline 28–threonine 110 form a disordered region. 5 repeat units span residues proline 54–glutamine 62, proline 63–glutamine 70, proline 71–glutamine 78, proline 79–glutamine 86, and proline 87–glutamine 95. The interval proline 54–glutamine 95 is 5 X 8 AA tandem repeats of P-H-G-G-G-W-G-Q. Positions glutamine 55–glycine 97 are enriched in gly residues. Cu(2+) is bound by residues histidine 64, glycine 65, glycine 66, histidine 72, glycine 73, glycine 74, histidine 80, glycine 81, glycine 82, histidine 88, glycine 90, and glycine 91. A disulfide bond links cysteine 182 and cysteine 217. N-linked (GlcNAc...) asparagine glycans are attached at residues asparagine 184 and asparagine 200. A lipid anchor (GPI-anchor amidated alanine) is attached at alanine 233. A propeptide spans serine 234–glycine 256 (removed in mature form).

This sequence belongs to the prion family. As to quaternary structure, monomer and homodimer. Has a tendency to aggregate into amyloid fibrils containing a cross-beta spine, formed by a steric zipper of superposed beta-strands. Soluble oligomers may represent an intermediate stage on the path to fibril formation. Copper binding may promote oligomerization. Interacts with GRB2, APP, ERI3/PRNPIP and SYN1. Mislocalized cytosolically exposed PrP interacts with MGRN1; this interaction alters MGRN1 subcellular location and causes lysosomal enlargement. Interacts with KIAA1191.

The protein localises to the cell membrane. It is found in the golgi apparatus. Its function is as follows. Its primary physiological function is unclear. Has cytoprotective activity against internal or environmental stresses. May play a role in neuronal development and synaptic plasticity. May be required for neuronal myelin sheath maintenance. May play a role in iron uptake and iron homeostasis. Soluble oligomers are toxic to cultured neuroblastoma cells and induce apoptosis (in vitro). Association with GPC1 (via its heparan sulfate chains) targets PRNP to lipid rafts. Also provides Cu(2+) or Zn(2+) for the ascorbate-mediated GPC1 deaminase degradation of its heparan sulfate side chains. This chain is Major prion protein (PRNP), found in Ovis canadensis (Bighorn sheep).